The following is a 296-amino-acid chain: Syntenin-2 (296 aa).

PDZ domains lie at 112 to 191 and 196 to 271; these read EIHL…VRDR and TVTM…IPTV.

As to quaternary structure, monomer and homodimer. Interacts with SDCBP. Interacts with TM4SF1.

It is found in the cytoplasm. The protein localises to the nucleus. It localises to the nucleolus. Its subcellular location is the nucleoplasm. The protein resides in the cell membrane. It is found in the nucleus speckle. In terms of biological role, binds phosphatidylinositol 4,5-bisphosphate (PIP2). May play a role in the organization of nuclear PIP2, cell division and cell survival. This is Syntenin-2 (Sdcbp2) from Rattus norvegicus (Rat).